Here is a 449-residue protein sequence, read N- to C-terminus: Trigger factor (449 aa).

The PPIase FKBP-type domain occupies Gly-162–Pro-242. Residues Ala-428–Ala-449 form a disordered region. Over residues Pro-438–Ala-449 the composition is skewed to low complexity.

This sequence belongs to the FKBP-type PPIase family. Tig subfamily.

It localises to the cytoplasm. It catalyses the reaction [protein]-peptidylproline (omega=180) = [protein]-peptidylproline (omega=0). In terms of biological role, involved in protein export. Acts as a chaperone by maintaining the newly synthesized protein in an open conformation. Functions as a peptidyl-prolyl cis-trans isomerase. The polypeptide is Trigger factor (Acidothermus cellulolyticus (strain ATCC 43068 / DSM 8971 / 11B)).